The chain runs to 383 residues: 8-amino-7-oxononanoate synthase (383 aa).

Arginine 21 is a binding site for substrate. Position 108-109 (glycine 108–tyrosine 109) interacts with pyridoxal 5'-phosphate. A substrate-binding site is contributed by histidine 133. Positions 179, 207, and 233 each coordinate pyridoxal 5'-phosphate. Lysine 236 bears the N6-(pyridoxal phosphate)lysine mark. Threonine 350 is a binding site for substrate.

Belongs to the class-II pyridoxal-phosphate-dependent aminotransferase family. BioF subfamily. Homodimer. It depends on pyridoxal 5'-phosphate as a cofactor.

The catalysed reaction is 6-carboxyhexanoyl-[ACP] + L-alanine + H(+) = (8S)-8-amino-7-oxononanoate + holo-[ACP] + CO2. Its pathway is cofactor biosynthesis; biotin biosynthesis. Its function is as follows. Catalyzes the decarboxylative condensation of pimeloyl-[acyl-carrier protein] and L-alanine to produce 8-amino-7-oxononanoate (AON), [acyl-carrier protein], and carbon dioxide. In Yersinia pseudotuberculosis serotype O:1b (strain IP 31758), this protein is 8-amino-7-oxononanoate synthase.